The primary structure comprises 625 residues: Low affinity potassium transport system protein Kup (625 aa).

A run of 12 helical transmembrane segments spans residues 15-35 (TIFSTINVLHGLIAISPIYII), 58-78 (IIFWTLFFIIFLKYLILIVSI), 103-123 (FVIVILGLISMCLFFGDIIII), 140-160 (LSFEKFIFIISIAIFTFLFFI), 171-191 (IFSFLISIWFILVGLIGLKGI), 218-238 (FFVFGTLILLISISEILYINI), 251-271 (LFFVFPMIMINCFGQGSIILL), 282-302 (FLVPDWARFFTFTFAIIISII), 340-360 (IYIPCINWIFYLSAVIQISIF), 366-386 (LILIYGIGSIITMSLTTFFSL), 396-416 (FKILKITFLLTILILEFFIFI), and 422-442 (IICGGWFPIVFGIIFFTIMIT).

The protein belongs to the HAK/KUP transporter (TC 2.A.72) family.

It localises to the cell membrane. It catalyses the reaction K(+)(in) + H(+)(in) = K(+)(out) + H(+)(out). Its function is as follows. Responsible for the low-affinity transport of potassium into the cell. Likely operates as a K(+):H(+) symporter. This is Low affinity potassium transport system protein Kup from Wigglesworthia glossinidia brevipalpis.